Consider the following 306-residue polypeptide: MATH domain and coiled-coil domain-containing protein At3g29580 (306 aa).

The MATH domain maps to 6-132; sequence DNKFTWVIKN…NGEIKIVVEF (127 aa). Residues 253–298 adopt a coiled-coil conformation; sequence FKLDWLEKKLNEVLEKKEKEESYETRMREIEEEMKDLKAKALDVGA.

The protein is MATH domain and coiled-coil domain-containing protein At3g29580 of Arabidopsis thaliana (Mouse-ear cress).